The following is a 677-amino-acid chain: Zinc finger CCCH domain-containing protein 23 (677 aa).

The disordered stretch occupies residues 66–117; that stretch reads PPQAASSSPTVPAAHSPFLLSRQNSGRCPAPSPSSWAQAQPFSRSNSMGNGG. Residues 69–82 are compositionally biased toward low complexity; that stretch reads AASSSPTVPAAHSP. Polar residues predominate over residues 98–113; it reads PSSWAQAQPFSRSNSM. Residues 228–255 form a C3H1-type zinc finger; sequence GFGWKPCLYYARGFCKNGSTCRFVHGGL. In terms of domain architecture, RRM spans 359–435; the sequence is RQIYLTFPAD…RVLVKPYKEK (77 aa). A coiled-coil region spans residues 480–513; sequence ANELMLRRKLEEQQQAAELQQAIDLHSRRLIGLQ. Polar residues predominate over residues 535 to 562; the sequence is TPITNAFTSGQPGATTIVESPPSSTGQL. Residues 535–607 are disordered; sequence TPITNAFTSG…EHNLPDSPFA (73 aa). Positions 589–601 are enriched in basic and acidic residues; sequence RNADSDQSGEHNL.

The chain is Zinc finger CCCH domain-containing protein 23 from Oryza sativa subsp. japonica (Rice).